A 251-amino-acid polypeptide reads, in one-letter code: NADPH-dependent oxidoreductase (251 aa).

Belongs to the flavin oxidoreductase frp family. It depends on FMN as a cofactor.

Its function is as follows. Reduces FMN, organic nitro compounds and disulfide DTNB. Involved in maintenance of the cellular redox state and the disulfide stress response. The sequence is that of NADPH-dependent oxidoreductase (nfrA) from Staphylococcus epidermidis (strain ATCC 12228 / FDA PCI 1200).